A 614-amino-acid chain; its full sequence is Dihydroxy-acid dehydratase (614 aa).

Aspartate 81 serves as a coordination point for Mg(2+). A [2Fe-2S] cluster-binding site is contributed by cysteine 122. 2 residues coordinate Mg(2+): aspartate 123 and lysine 124. Lysine 124 is modified (N6-carboxylysine). Cysteine 195 lines the [2Fe-2S] cluster pocket. Glutamate 491 is a Mg(2+) binding site. Serine 517 (proton acceptor) is an active-site residue.

The protein belongs to the IlvD/Edd family. In terms of assembly, homodimer. Requires [2Fe-2S] cluster as cofactor. Mg(2+) serves as cofactor.

The catalysed reaction is (2R)-2,3-dihydroxy-3-methylbutanoate = 3-methyl-2-oxobutanoate + H2O. It catalyses the reaction (2R,3R)-2,3-dihydroxy-3-methylpentanoate = (S)-3-methyl-2-oxopentanoate + H2O. It functions in the pathway amino-acid biosynthesis; L-isoleucine biosynthesis; L-isoleucine from 2-oxobutanoate: step 3/4. The protein operates within amino-acid biosynthesis; L-valine biosynthesis; L-valine from pyruvate: step 3/4. In terms of biological role, functions in the biosynthesis of branched-chain amino acids. Catalyzes the dehydration of (2R,3R)-2,3-dihydroxy-3-methylpentanoate (2,3-dihydroxy-3-methylvalerate) into 2-oxo-3-methylpentanoate (2-oxo-3-methylvalerate) and of (2R)-2,3-dihydroxy-3-methylbutanoate (2,3-dihydroxyisovalerate) into 2-oxo-3-methylbutanoate (2-oxoisovalerate), the penultimate precursor to L-isoleucine and L-valine, respectively. In Nitrobacter winogradskyi (strain ATCC 25391 / DSM 10237 / CIP 104748 / NCIMB 11846 / Nb-255), this protein is Dihydroxy-acid dehydratase.